Consider the following 54-residue polypeptide: Hemoglobin subunit omega (54 aa).

A Globin domain is found at 2–54; the sequence is HWTAEEKQIILAIWAKIDIEEAGAAALSRLLVVYPWTQRYFKNFGNLSSPTAI.

The protein belongs to the globin family.

Hemoglobin omega chain is an embryonic-type beta-type chain found in prenatal and neonatal marsupials. The polypeptide is Hemoglobin subunit omega (Notamacropus eugenii (Tammar wallaby)).